Consider the following 380-residue polypeptide: Forkhead box protein F1 (380 aa).

Positions 1–19 (MTAEVQQPSVQTPAHSSPM) are enriched in polar residues. Residues 1–49 (MTAEVQQPSVQTPAHSSPMTEKPVQTPVMETSSSSSSTKAKKTNAGIRR) form a disordered region. The segment at residues 52 to 146 (KPPYSYIALI…EEGSFRRRPR (95 aa)) is a DNA-binding region (fork-head).

Its subcellular location is the nucleus. The protein is Forkhead box protein F1 (foxf1) of Danio rerio (Zebrafish).